Consider the following 287-residue polypeptide: Probable F-box protein At5g04010 (287 aa).

The 52-residue stretch at 50-101 (PSPPSWEILCLVGPYMDPESLAVASCVSTTWSKCFSSEDLWKSLPATRHSIF) folds into the F-box; degenerate domain.

This is Probable F-box protein At5g04010 (NSFBx) from Arabidopsis thaliana (Mouse-ear cress).